We begin with the raw amino-acid sequence, 378 residues long: MKILVDENMPYARDLFSRLGEVTAVPGRPIPVAQLADADALMVRSVTKVNESLLAGKPIKFVGTATAGTDHVDEAWLKQAGIGFSAAPGCNAIAVVEYVFSSLLMLAERDGFSLHDRTVGIVGVGNVGRRLQARLEALGIKTLLCDPPRADRGDEGDFRSLDELVQHADILTFHTPLFKDGPYKTLHLADEKLIRSLKPGAILINACRGAVVDNTALLTCLNEGQKLSVVLDVWEGEPELNVELLTKVDIGTPHIAGYTLEGKARGTTQVFEAYSKFIGHEQHVALDTLLPAPEFGRITLHGPLDQPTLKRLVHLVYDVRRDDAPLRKVAGIPGEFDKLRKNYLERREWSSLYVICDDASAASLLCKLGFNAVHHPAR.

Positions 45 and 66 each coordinate substrate. NAD(+) contacts are provided by D146 and T175. The active site involves R208. D232 lines the NAD(+) pocket. E237 is a catalytic residue. H254 functions as the Proton donor in the catalytic mechanism. G257 contributes to the NAD(+) binding site. Residue Y258 coordinates substrate.

This sequence belongs to the D-isomer specific 2-hydroxyacid dehydrogenase family. PdxB subfamily. As to quaternary structure, homodimer.

It is found in the cytoplasm. It catalyses the reaction 4-phospho-D-erythronate + NAD(+) = (R)-3-hydroxy-2-oxo-4-phosphooxybutanoate + NADH + H(+). It participates in cofactor biosynthesis; pyridoxine 5'-phosphate biosynthesis; pyridoxine 5'-phosphate from D-erythrose 4-phosphate: step 2/5. In terms of biological role, catalyzes the oxidation of erythronate-4-phosphate to 3-hydroxy-2-oxo-4-phosphonooxybutanoate. This chain is Erythronate-4-phosphate dehydrogenase, found in Escherichia coli O8 (strain IAI1).